The following is a 153-amino-acid chain: Transcriptional repressor NrdR (153 aa).

The segment at 3–34 is a zinc-finger region; sequence CPSCHHSGTRVLESRPVEEGRSIRRRRECEQC. Positions 49–139 constitute an ATP-cone domain; it reads LIVVKKEGTR…VYRQFKDINV (91 aa).

The protein belongs to the NrdR family. Zn(2+) serves as cofactor.

In terms of biological role, negatively regulates transcription of bacterial ribonucleotide reductase nrd genes and operons by binding to NrdR-boxes. This Geobacillus kaustophilus (strain HTA426) protein is Transcriptional repressor NrdR.